We begin with the raw amino-acid sequence, 426 residues long: COMPASS component SWD1 (426 aa).

5 WD repeats span residues E24–V63, A70–K109, I212–A251, I264–V307, and G310–A350. DNA is bound by residues R236 and K266.

As to quaternary structure, component of the Set1C/COMPASS complex which consists of SET1(2), BRE2(2), SPP1(2), SDC1(1), SHG1(1), SWD1(1), SWD2(1), and SWD3(1).

It is found in the nucleus. The protein resides in the chromosome. The protein localises to the telomere. Functionally, component of the Set1C/COMPASS complex that specifically mono-, di- and trimethylates histone H3 to form H3K4me1/2/3, which subsequently plays a role in telomere length maintenance and transcription elongation regulation. COMPASS recognizes ubiquitinated H2B on one face of the nucleosome which stimulates the methylation of H3 on the opposing face. SWD1/CPS50 acts as an assembly and regulatory hub for COMPASS complex formation. Serves as a highly utilized surface for COMPASS interaction with the nucleosome. The polypeptide is COMPASS component SWD1 (Saccharomyces cerevisiae (strain ATCC 204508 / S288c) (Baker's yeast)).